Here is a 588-residue protein sequence, read N- to C-terminus: 2-isopropylmalate synthase (588 aa).

The region spanning 40 to 314 (PRWCAVDLRD…DPQIDFSDLD (275 aa)) is the Pyruvate carboxyltransferase domain. Mg(2+)-binding residues include Asp49, His253, His255, and Asn289. The regulatory domain stretch occupies residues 456–588 (APLDRVEEKW…TVREPELAAV (133 aa)).

Belongs to the alpha-IPM synthase/homocitrate synthase family. LeuA type 2 subfamily. Homodimer. Mg(2+) serves as cofactor.

The protein resides in the cytoplasm. It carries out the reaction 3-methyl-2-oxobutanoate + acetyl-CoA + H2O = (2S)-2-isopropylmalate + CoA + H(+). The protein operates within amino-acid biosynthesis; L-leucine biosynthesis; L-leucine from 3-methyl-2-oxobutanoate: step 1/4. Its function is as follows. Catalyzes the condensation of the acetyl group of acetyl-CoA with 3-methyl-2-oxobutanoate (2-ketoisovalerate) to form 3-carboxy-3-hydroxy-4-methylpentanoate (2-isopropylmalate). The protein is 2-isopropylmalate synthase of Clavibacter michiganensis subsp. michiganensis (strain NCPPB 382).